Here is a 490-residue protein sequence, read N- to C-terminus: GTPase Der (490 aa).

EngA-type G domains follow at residues 3-166 (PVVA…AEAM) and 200-373 (IKLA…DSAT). GTP is bound by residues 9–16 (GRPNVGKS), 56–60 (DTGGI), 118–121 (NKVD), 206–213 (GKPNVGKS), 253–257 (DTAGV), and 318–321 (NKWD). The KH-like domain occupies 374–458 (RRVSTSMLTR…PIQLRFQEGG (85 aa)).

Belongs to the TRAFAC class TrmE-Era-EngA-EngB-Septin-like GTPase superfamily. EngA (Der) GTPase family. As to quaternary structure, associates with the 50S ribosomal subunit.

Its function is as follows. GTPase that plays an essential role in the late steps of ribosome biogenesis. The protein is GTPase Der of Shewanella halifaxensis (strain HAW-EB4).